The sequence spans 839 residues: Autophagy-related protein 9A (839 aa).

The tract at residues 1 to 21 (MAQFDTEYQRLEASYSDSPPG) is disordered. Alanine 2 is subject to N-acetylalanine. At 2 to 61 (AQFDTEYQRLEASYSDSPPGEEDLLVHVPEGSKSPWHHIENLDLFFSRVYNLHQKNGFTC) the chain is on the cytoplasmic side. Positions 8–11 (YQRL) match the Tyrosine-based sorting signal motif. Serine 14, serine 16, and serine 18 each carry phosphoserine. A helical membrane pass occupies residues 62–84 (MLIGEIFELMQFLFVVAFTTFLV). Residues 85-128 (SCVDYDILFANKMVNHSLHPTEPVKVTLPDAFLPAQVCSARIQE) lie on the Lumenal side of the membrane. An N-linked (GlcNAc...) asparagine glycan is attached at asparagine 99. A helical membrane pass occupies residues 129 to 154 (NGSLITILVIAGVFWVHRLIKFIYNI). At 155-290 (CCYWEIHSFY…ELAQRLSNRI (136 aa)) the chain is on the cytoplasmic side. Residues 291–301 (LWIGIANFLLC) lie within the membrane without spanning it. Topologically, residues 302 to 319 (PLILIWQILYAFFSYAEV) are cytoplasmic. The stretch at 320 to 328 (LKREPGALG) is an intramembrane region. Topologically, residues 329 to 371 (ARCWSLYGRCYLRHFNELEHELQSRLNRGYKPASKYMNCFLSP) are cytoplasmic. A helical membrane pass occupies residues 372-397 (LLTLLAKNCAFFAGSILAVLIALTIY). The Lumenal portion of the chain corresponds to 398-406 (DEDVLAVEH). The helical transmembrane segment at 407 to 424 (VLTTVTLLGVTVTVCRSF) threads the bilayer. The Cytoplasmic portion of the chain corresponds to 425–470 (IPDQHMVFCPEQLLRVILAHIHYMPDHWQGNAHRSQTRDEFAQLFQ). Residues 471 to 480 (YKAVFILEEL) lie within the membrane without spanning it. The Cytoplasmic segment spans residues 481–483 (LSP). The stretch at 484-492 (IVTPLILIF) is an intramembrane region. Topologically, residues 493-839 (CLRPRALEII…DELPPQVHKV (347 aa)) are cytoplasmic. Residues serine 656, serine 735, serine 738, serine 741, and serine 828 each carry the phosphoserine modification. Disordered stretches follow at residues 656 to 688 (SPLQ…GSSV) and 719 to 839 (QQAQ…VHKV). A compositionally biased stretch (basic and acidic residues) spans 724-736 (EPERHVWHRRESD). Acidic residues-rich tracts occupy residues 737–747 (ESGESAPEEGG) and 823–832 (VPEEGSEDEL).

The protein belongs to the ATG9 family. In terms of assembly, homotrimer; forms a homotrimer with a central pore that forms a path between the two membrane leaflets. Interacts (via cytoplasmic its C-terminus) with ATG2A. Interacts with SUPT20H. Interacts (via the tyrosine-based sorting signal motif) with AP4M1; promoting association with the AP-4 complex. Interacts with ARFIP1 and ARFIP2. Interacts with PI4K2A and PI4KB. Interacts with ATG4A; the interaction is direct and promotes ATG9A trafficking. Post-translationally, ufmylated in a DDRGK1 dependent manner.

The protein localises to the preautophagosomal structure membrane. Its subcellular location is the cytoplasmic vesicle. It is found in the autophagosome membrane. It localises to the golgi apparatus. The protein resides in the trans-Golgi network membrane. The protein localises to the late endosome membrane. Its subcellular location is the recycling endosome membrane. It is found in the endoplasmic reticulum membrane. It localises to the mitochondrion membrane. The enzyme catalyses a 1,2-diacyl-sn-glycero-3-phosphocholine(in) = a 1,2-diacyl-sn-glycero-3-phosphocholine(out). It carries out the reaction a 1,2-diacyl-sn-glycero-3-phospho-L-serine(in) = a 1,2-diacyl-sn-glycero-3-phospho-L-serine(out). The catalysed reaction is a 1,2-diacyl-sn-glycero-3-phosphoethanolamine(in) = a 1,2-diacyl-sn-glycero-3-phosphoethanolamine(out). Phospholipid scramblase involved in autophagy by mediating autophagosomal membrane expansion. Cycles between the preautophagosomal structure/phagophore assembly site (PAS) and the cytoplasmic vesicle pool and supplies membrane for the growing autophagosome. Lipid scramblase activity plays a key role in preautophagosomal structure/phagophore assembly by distributing the phospholipids that arrive through ATG2 (ATG2A or ATG2B) from the cytoplasmic to the luminal leaflet of the bilayer, thereby driving autophagosomal membrane expansion. Also required to supply phosphatidylinositol 4-phosphate to the autophagosome initiation site by recruiting the phosphatidylinositol 4-kinase beta (PI4KB) in a process dependent on ARFIP2, but not ARFIP1. In addition to autophagy, also plays a role in necrotic cell death. The sequence is that of Autophagy-related protein 9A from Bos taurus (Bovine).